Here is a 233-residue protein sequence, read N- to C-terminus: MLFEPPLISATLVRRYKRFLADVVLASGEEITVHCPNTGSMKNCVVPHSPCYLSDSNNPKRKYRYTLELVTTPDGDLAGVNTGRANALVEEAIRAGVVPELAGYQIQREQKYGEEGSRIDLLLSRGEERCFVEVKNVTLAEPGGQGLFPDAVSVRGAKHLRELMYVRAQGHRAVLFFCVQHTGVNLVSPADDIDAVYGQLLREAAGAGVEIFAVRATLGSCEIKLRELLPVVL.

It belongs to the SfsA family.

In Teredinibacter turnerae (strain ATCC 39867 / T7901), this protein is Sugar fermentation stimulation protein homolog.